The sequence spans 78 residues: Calcium/calmodulin-dependent protein kinase II inhibitor 1 (78 aa).

The interval N41–K68 is CAMK2 inhibitory domain.

Belongs to the CAMK2N family. Interacts with CAMK2B; the presence of Ca(2+)/calmodulin increases the interaction but is not essential. Interacts with CAMK2A; this interaction requires CAMK2A activation by Ca(2+).

It is found in the synapse. Its subcellular location is the cell projection. It localises to the dendrite. The protein localises to the postsynaptic density. Potent and specific inhibitor of CaM-kinase II (CAMK2). Plays a role in the maintenance of long-term retrieval-induced memory in response to contextual fear. Modulates blood pressure and vascular reactivity via regulation of CAMK2 activity in addition to regulation of left ventricular mass. Mediates the NLRP3 inflammasome in cardiomyocytes via acting as an inhibitor of the MAPK14/p38 and MAPK8/JNK pathways, thereby regulating ventricular remodeling and cardiac rhythm post-myocardial infarction. Negatively effects insulin sensitivity and promotes lipid formation in adipose tissues independent of CAMK2 signaling. The protein is Calcium/calmodulin-dependent protein kinase II inhibitor 1 (CAMK2N1) of Homo sapiens (Human).